A 113-amino-acid chain; its full sequence is Probable 4-amino-4-deoxy-L-arabinose-phosphoundecaprenol flippase subunit ArnE (113 aa).

Transmembrane regions (helical) follow at residues 40–60 (FGWL…WLLV), 64–84 (LPLG…TLLA), and 92–112 (VDRH…LMQG).

It belongs to the ArnE family. As to quaternary structure, heterodimer of ArnE and ArnF.

The protein resides in the cell inner membrane. It participates in bacterial outer membrane biogenesis; lipopolysaccharide biosynthesis. Its function is as follows. Translocates 4-amino-4-deoxy-L-arabinose-phosphoundecaprenol (alpha-L-Ara4N-phosphoundecaprenol) from the cytoplasmic to the periplasmic side of the inner membrane. The chain is Probable 4-amino-4-deoxy-L-arabinose-phosphoundecaprenol flippase subunit ArnE from Pectobacterium atrosepticum (strain SCRI 1043 / ATCC BAA-672) (Erwinia carotovora subsp. atroseptica).